Consider the following 844-residue polypeptide: DNA mismatch repair protein MutS (844 aa).

602–609 is a binding site for ATP; the sequence is GPNMSGKS.

The protein belongs to the DNA mismatch repair MutS family.

Its function is as follows. This protein is involved in the repair of mismatches in DNA. It is possible that it carries out the mismatch recognition step. This protein has a weak ATPase activity. The sequence is that of DNA mismatch repair protein MutS from Streptococcus pneumoniae (strain ATCC 700669 / Spain 23F-1).